The primary structure comprises 136 residues: Large ribosomal subunit protein uL22 (136 aa).

The protein belongs to the universal ribosomal protein uL22 family. Part of the 50S ribosomal subunit.

Its function is as follows. This protein binds specifically to 23S rRNA; its binding is stimulated by other ribosomal proteins, e.g. L4, L17, and L20. It is important during the early stages of 50S assembly. It makes multiple contacts with different domains of the 23S rRNA in the assembled 50S subunit and ribosome. In terms of biological role, the globular domain of the protein is located near the polypeptide exit tunnel on the outside of the subunit, while an extended beta-hairpin is found that lines the wall of the exit tunnel in the center of the 70S ribosome. The protein is Large ribosomal subunit protein uL22 of Parabacteroides distasonis (strain ATCC 8503 / DSM 20701 / CIP 104284 / JCM 5825 / NCTC 11152).